The sequence spans 212 residues: EFC-associated protein OPG053 (212 aa).

At 1–175 the chain is on the virion surface side; it reads MAETKEFKTL…IIENRLPYYD (175 aa). Intrachain disulfides connect cysteine 33–cysteine 55, cysteine 47–cysteine 127, and cysteine 107–cysteine 149. Residues 176–196 form a helical membrane-spanning segment; sequence PWFLVGVAIILVIFTVAICSI. Residues 197–212 are Intravirion-facing; that stretch reads RRNLALKYRYGTFLYV.

It belongs to the orthopoxvirus OPG053 family. Component of the entry fusion complex (EFC) composed of OPG053, OPG076, OPG086, OPG094, OPG095, OPG099, OPG107, OPG143, OPG104, OPG147 and OPG155. Except for OPG095 and OPG052, each of the EFC proteins is required for assembly or stability of the complex. In terms of processing, disulfid bonds are oxidized in the cytoplasm by OPG088 protein. Unglycosylated because produced in viral factories instead of the classic ER -Golgi route.

The protein resides in the virion membrane. Its function is as follows. Component of the entry fusion complex (EFC), which consists of 11 proteins. During cell infection, this complex mediates entry of the virion core into the host cytoplasm by a two-step mechanism consisting of lipid mixing of the viral and cellular membranes and subsequent pore formation. This chain is EFC-associated protein OPG053 (OPG053), found in Homo sapiens (Human).